The chain runs to 516 residues: Adenine DNA glycosylase (516 aa).

Residues 1–23 show a composition bias toward basic residues; the sequence is MKKLRASVRSHKKQPANHKRRGK. The interval 1–38 is disordered; it reads MKKLRASVRSHKKQPANHKRRGKCALSSSQAKPSGLDG. The Proton donor/acceptor role is filled by E105. The [4Fe-4S] cluster site is built by C261, C268, C271, and C277. A Nudix hydrolase domain is found at 335–467; the sequence is PREEYSATCV…AMKKVFRVYE (133 aa). A Nudix box motif is present at residues 376–398; the sequence is VTLEPSGQHQHKALLQELQHWSA. Positions 474-516 are disordered; that stretch reads CKGSKRPQVCTPSSRKKPSRGQQVLDRFFQRHIPTHKPNSTTQ.

The protein belongs to the Nth/MutY family. [4Fe-4S] cluster serves as cofactor. Expressed in brain, spleen, heart, liver and kidney.

The protein localises to the nucleus. It is found in the mitochondrion. It catalyses the reaction Hydrolyzes free adenine bases from 7,8-dihydro-8-oxoguanine:adenine mismatched double-stranded DNA, leaving an apurinic site.. Involved in oxidative DNA damage repair. Initiates repair of A*oxoG to C*G by removing the inappropriately paired adenine base from the DNA backbone. Possesses both adenine and 2-OH-A DNA glycosylase activities. In Rattus norvegicus (Rat), this protein is Adenine DNA glycosylase (Mutyh).